The sequence spans 30 residues: Proteinase inhibitor CeKI (30 aa).

This sequence belongs to the protease inhibitor I3 (leguminous Kunitz-type inhibitor) family.

In terms of biological role, potent inhibitor of serine proteases plasma kallikrein, plasmin and coagulation factor XIIa. Weak inhibitor of serine proteases trypsin and coagulation factor Xa. Does not inhibit the serine proteases chymotrypsin, elastase or thrombin. Inhibits kinin release from HMW-kininogen by kallikrein in vitro. The protein is Proteinase inhibitor CeKI of Paubrasilia echinata (Pau Brasil).